The primary structure comprises 450 residues: Tubulin alpha-1 chain (450 aa).

Residues Gln11, Glu71, Gly144, Thr145, Thr179, Asn206, and Asn228 each coordinate GTP. Mg(2+) is bound at residue Glu71. Glu254 is an active-site residue. Thr349 bears the Phosphothreonine mark. The tract at residues 431–450 (DYEEVGGEGAEDDDEEGDEY) is disordered.

The protein belongs to the tubulin family. In terms of assembly, dimer of alpha and beta chains. A typical microtubule is a hollow water-filled tube with an outer diameter of 25 nm and an inner diameter of 15 nM. Alpha-beta heterodimers associate head-to-tail to form protofilaments running lengthwise along the microtubule wall with the beta-tubulin subunit facing the microtubule plus end conferring a structural polarity. Microtubules usually have 13 protofilaments but different protofilament numbers can be found in some organisms and specialized cells. It depends on Mg(2+) as a cofactor. In terms of processing, undergoes a tyrosination/detyrosination cycle, the cyclic removal and re-addition of a C-terminal tyrosine residue by the enzymes tubulin tyrosine carboxypeptidase (TTCP) and tubulin tyrosine ligase (TTL), respectively.

The protein resides in the cytoplasm. The protein localises to the cytoskeleton. The catalysed reaction is GTP + H2O = GDP + phosphate + H(+). In terms of biological role, tubulin is the major constituent of microtubules, a cylinder consisting of laterally associated linear protofilaments composed of alpha- and beta-tubulin heterodimers. Microtubules grow by the addition of GTP-tubulin dimers to the microtubule end, where a stabilizing cap forms. Below the cap, tubulin dimers are in GDP-bound state, owing to GTPase activity of alpha-tubulin. In Arabidopsis thaliana (Mouse-ear cress), this protein is Tubulin alpha-1 chain (TUBA1).